Reading from the N-terminus, the 188-residue chain is Peptidyl-tRNA hydrolase (188 aa).

Residue F15 participates in tRNA binding. H20 serves as the catalytic Proton acceptor. Y64, N66, and N112 together coordinate tRNA.

It belongs to the PTH family. As to quaternary structure, monomer.

It localises to the cytoplasm. The enzyme catalyses an N-acyl-L-alpha-aminoacyl-tRNA + H2O = an N-acyl-L-amino acid + a tRNA + H(+). In terms of biological role, hydrolyzes ribosome-free peptidyl-tRNAs (with 1 or more amino acids incorporated), which drop off the ribosome during protein synthesis, or as a result of ribosome stalling. Catalyzes the release of premature peptidyl moieties from peptidyl-tRNA molecules trapped in stalled 50S ribosomal subunits, and thus maintains levels of free tRNAs and 50S ribosomes. This Borrelia recurrentis (strain A1) protein is Peptidyl-tRNA hydrolase.